The following is a 312-amino-acid chain: Ribosomal RNA small subunit methyltransferase H (312 aa).

Residues 33-35, aspartate 52, phenylalanine 81, aspartate 102, and glutamine 109 each bind S-adenosyl-L-methionine; that span reads GGH.

The protein belongs to the methyltransferase superfamily. RsmH family.

It is found in the cytoplasm. The enzyme catalyses cytidine(1402) in 16S rRNA + S-adenosyl-L-methionine = N(4)-methylcytidine(1402) in 16S rRNA + S-adenosyl-L-homocysteine + H(+). In terms of biological role, specifically methylates the N4 position of cytidine in position 1402 (C1402) of 16S rRNA. The protein is Ribosomal RNA small subunit methyltransferase H of Leuconostoc mesenteroides subsp. mesenteroides (strain ATCC 8293 / DSM 20343 / BCRC 11652 / CCM 1803 / JCM 6124 / NCDO 523 / NBRC 100496 / NCIMB 8023 / NCTC 12954 / NRRL B-1118 / 37Y).